The primary structure comprises 830 residues: Cyclin-dependent kinase inhibitor FAR1 (830 aa).

Residues Met-1–Phe-31 form a disordered region. Residues Ser-8 to Pro-27 are compositionally biased toward basic and acidic residues. Ser-87 carries the post-translational modification Phosphoserine; by CDC28. Phosphoserine is present on residues Ser-110 and Ser-114. An RING-type zinc finger spans residues Cys-202 to Gly-252. Thr-306 bears the Phosphothreonine mark.

In terms of assembly, associates with the CDC28-CLN complex. In terms of processing, thought to be phosphorylated by MAP kinase FUS3. Thought to enhance the binding of FAR1 to G1-specific cyclin-dependent kinase (CDK) complexes.

Its function is as follows. Inhibitor of the cyclin-dependent kinase CDC28. Necessary for cell cycle arrest. Involved in pheromone response. Contributes to mating efficiency. Required for oriented polarization of yeast cells in response to mating pheromones. In Saccharomyces cerevisiae (strain ATCC 204508 / S288c) (Baker's yeast), this protein is Cyclin-dependent kinase inhibitor FAR1 (FAR1).